The sequence spans 307 residues: Nucleotide-binding protein AAur_2084 (307 aa).

A disordered region spans residues 1–21; it reads MDEATAKSGTEQDGLTPVKPP. An ATP-binding site is contributed by 30–37; the sequence is GMSGAGRS. Residue 81-84 coordinates GTP; the sequence is DVRS.

This sequence belongs to the RapZ-like family.

Functionally, displays ATPase and GTPase activities. This is Nucleotide-binding protein AAur_2084 from Paenarthrobacter aurescens (strain TC1).